A 469-amino-acid polypeptide reads, in one-letter code: Alpha,alpha-trehalose-phosphate synthase [UDP-forming] (469 aa).

2 residues coordinate D-glucose 6-phosphate: tyrosine 87 and aspartate 141. The UDP site is built by arginine 279 and lysine 284. Arginine 279 and lysine 284 together coordinate UDP-alpha-D-glucose. Arginine 317 contacts D-glucose 6-phosphate. Position 378 to 386 (378 to 386) interacts with UDP-alpha-D-glucose; the sequence is DGMNLVSYE. 382–386 contacts UDP; sequence LVSYE.

The protein belongs to the glycosyltransferase 20 family.

The catalysed reaction is D-glucose 6-phosphate + UDP-alpha-D-glucose = alpha,alpha-trehalose 6-phosphate + UDP + H(+). It functions in the pathway carbohydrate biosynthesis. Functionally, synthase catalytic subunit of the trehalose synthase complex that catalyzes the production of trehalose from glucose-6-phosphate and UDP-alpha-D-glucose in a two step process. The disaccharide trehalose serves as a storage carbohydrate that is mobilized during spore germination. The protein is Alpha,alpha-trehalose-phosphate synthase [UDP-forming] of Yarrowia lipolytica (strain CLIB 122 / E 150) (Yeast).